The following is a 203-amino-acid chain: Outer-membrane lipoprotein carrier protein (203 aa).

Positions 1–21 (MKKLIISCCLLATFSAAGAWA) are cleaved as a signal peptide. The tract at residues 174-203 (ALKSQQSGPISADKFKFRPPKGVTVDDQRQ) is disordered.

This sequence belongs to the LolA family. In terms of assembly, monomer.

It is found in the periplasm. Participates in the translocation of lipoproteins from the inner membrane to the outer membrane. Only forms a complex with a lipoprotein if the residue after the N-terminal Cys is not an aspartate (The Asp acts as a targeting signal to indicate that the lipoprotein should stay in the inner membrane). The polypeptide is Outer-membrane lipoprotein carrier protein (Erwinia tasmaniensis (strain DSM 17950 / CFBP 7177 / CIP 109463 / NCPPB 4357 / Et1/99)).